The following is a 150-amino-acid chain: MPIVDSGSVPALTAAEKATIRTAWAPVYAKYQSTGVDILIKFFTSNPAAQAFFPKFQGLTSADQLKKSMDVRWHAERIINAVNDAVVAMDDTEKMSLKLRELSGKHAKSFQVDPQYFKVLAAVIVDTVLPGDAGLEKLMSMICILLRSSY.

The region spanning 11–150 (ALTAAEKATI…MICILLRSSY (140 aa)) is the Globin domain. The heme b site is built by His74 and His106.

It belongs to the globin family. Monomer.

This chain is Globin-1, found in Petromyzon marinus (Sea lamprey).